Reading from the N-terminus, the 401-residue chain is L-threonine ammonia-lyase (401 aa).

At Lys-51 the chain carries N6-(pyridoxal phosphate)lysine. Pyridoxal 5'-phosphate contacts are provided by residues Asn-78, Gly-178–Leu-181, and Ser-301. Residues Phe-326–Gly-401 form the ACT domain.

The protein belongs to the serine/threonine dehydratase family. In terms of assembly, homotetramer. Pyridoxal 5'-phosphate serves as cofactor.

It carries out the reaction L-threonine = 2-oxobutanoate + NH4(+). The catalysed reaction is L-serine = pyruvate + NH4(+). Its pathway is amino-acid biosynthesis; L-isoleucine biosynthesis; 2-oxobutanoate from L-threonine: step 1/1. Activity is insensitive to allosteric regulators L-valine and L-isoleucine at low concentrations, while these L-amino acids are inhibitors at high concentrations. Is insensitive to ammonium chloride and AMP. Inhibited in the presence of aminoxyacetic acid (AOAA), an inhibitor of pyridoxal phosphate-dependent enzymes. Functionally, catalyzes the conversion of L-threonine to 2-oxobutanoate and ammonia. Can also use L-serine, but the catalytic efficiency toward L-threonine is about sixfold higher than that toward L-serine. Also shows weak activity toward L-allo-threonine, but cannot use the corresponding D-amino acids. Does not exhibit racemase activity toward various amino acids, including serine. Physiologically, is likely involved in the threonine-dependent pathway of isoleucine biosynthesis. The chain is L-threonine ammonia-lyase from Thermotoga maritima (strain ATCC 43589 / DSM 3109 / JCM 10099 / NBRC 100826 / MSB8).